Reading from the N-terminus, the 391-residue chain is Casein kinase II subunit alpha (391 aa).

An interaction with beta subunit region spans residues Q36 to L41. Residues Y39–F324 enclose the Protein kinase domain. ATP contacts are provided by residues L45 to V53 and K68. The active-site Proton acceptor is the D156. Phosphothreonine; by CDK1 is present on residues T344 and T360. A phosphoserine; by CDK1 mark is found at S362 and S370.

It belongs to the protein kinase superfamily. Ser/Thr protein kinase family. CK2 subfamily. Heterotetramer composed of two catalytic subunits (alpha chain and/or alpha' chain) and two regulatory subunits (beta chains). The tetramer can exist as a combination of 2 alpha/2 beta, 2 alpha'/2 beta or 1 alpha/1 alpha'/2 beta subunits. Also part of a CK2-SPT16-SSRP1 complex composed of SSRP1, SUPT16H, CSNK2A1, CSNK2A2 and CSNK2B, which forms following UV irradiation. Interacts with RNPS1. Interacts with SNAI1. Interacts with PML. Interacts with CCAR2. Interacts with HIRIP3. Post-translationally, phosphorylated at Thr-344, Thr-360, Ser-362 and Ser-370 by CDK1 in prophase and metaphase and dephosphorylated during anaphase. Phosphorylation does not directly affect casein kinase 2 activity, but may contribute to its regulation by forming binding sites for interacting proteins and/or targeting it to different compartments.

The protein resides in the nucleus. The catalysed reaction is L-seryl-[protein] + ATP = O-phospho-L-seryl-[protein] + ADP + H(+). It carries out the reaction L-threonyl-[protein] + ATP = O-phospho-L-threonyl-[protein] + ADP + H(+). With respect to regulation, constitutively active protein kinase whose activity is not directly affected by phosphorylation. Seems to be regulated by level of expression and localization. Its function is as follows. Catalytic subunit of a constitutively active serine/threonine-protein kinase complex that phosphorylates a large number of substrates containing acidic residues C-terminal to the phosphorylated serine or threonine. Regulates numerous cellular processes, such as cell cycle progression, apoptosis and transcription, as well as viral infection. May act as a regulatory node which integrates and coordinates numerous signals leading to an appropriate cellular response. During mitosis, functions as a component of the p53/TP53-dependent spindle assembly checkpoint (SAC) that maintains cyclin-B-CDK1 activity and G2 arrest in response to spindle damage. Also required for p53/TP53-mediated apoptosis, phosphorylating 'Ser-392' of p53/TP53 following UV irradiation. Phosphorylates a number of DNA repair proteins in response to DNA damage, such as MDC1, MRE11, RAD9A, RAD51 and HTATSF1, promoting their recruitment to DNA damage sites. Can also negatively regulate apoptosis. Phosphorylates the caspases CASP9 and CASP2 and the apoptotic regulator NOL3. Phosphorylation protects CASP9 from cleavage and activation by CASP8, and inhibits the dimerization of CASP2 and activation of CASP8. Phosphorylates YY1, protecting YY1 from cleavage by CASP7 during apoptosis. Regulates transcription by direct phosphorylation of RNA polymerases I, II, III and IV. Also phosphorylates and regulates numerous transcription factors including NF-kappa-B, STAT1, CREB1, IRF1, IRF2, ATF1, ATF4, SRF, MAX, JUN, FOS, MYC and MYB. Phosphorylates Hsp90 and its co-chaperones FKBP4 and CDC37, which is essential for chaperone function. Mediates sequential phosphorylation of FNIP1, promoting its gradual interaction with Hsp90, leading to activate both kinase and non-kinase client proteins of Hsp90. Regulates Wnt signaling by phosphorylating CTNNB1 and the transcription factor LEF1. Acts as an ectokinase that phosphorylates several extracellular proteins. Phosphorylates PML at 'Ser-565' and primes it for ubiquitin-mediated degradation. Plays an important role in the circadian clock function by phosphorylating BMAL1 at 'Ser-90' which is pivotal for its interaction with CLOCK and which controls CLOCK nuclear entry. Phosphorylates FMR1, promoting FMR1-dependent formation of a membraneless compartment. May phosphorylate histone H2A on 'Ser-1'. The protein is Casein kinase II subunit alpha (Csnk2a1) of Mus musculus (Mouse).